The chain runs to 219 residues: Adenylate kinase (219 aa).

10–15 (GAGKGT) contacts ATP. The interval 30 to 59 (ATGDLFRANISQGTDLGKQARAYMDAGQLV) is NMP. AMP is bound by residues T31, R36, 57-59 (QLV), 85-88 (GFPR), and Q92. Residues 126–164 (GRRVCRNNSAHVFHLTYNPPKAEGVCDACGGELYQRDDD) form an LID region. Residues R127 and 137–138 (VF) each bind ATP. AMP contacts are provided by R161 and R172. Residue G200 participates in ATP binding.

The protein belongs to the adenylate kinase family. Monomer.

The protein resides in the cytoplasm. The enzyme catalyses AMP + ATP = 2 ADP. It participates in purine metabolism; AMP biosynthesis via salvage pathway; AMP from ADP: step 1/1. Catalyzes the reversible transfer of the terminal phosphate group between ATP and AMP. Plays an important role in cellular energy homeostasis and in adenine nucleotide metabolism. The chain is Adenylate kinase from Streptomyces griseus subsp. griseus (strain JCM 4626 / CBS 651.72 / NBRC 13350 / KCC S-0626 / ISP 5235).